A 185-amino-acid polypeptide reads, in one-letter code: Urease accessory protein UreE (185 aa).

The tract at residues 153–185 is disordered; the sequence is LRANSAQGHGHSHSHSHDHHGYHHHGDGHWHKH. Over residues 162–175 the composition is skewed to basic residues; sequence GHSHSHSHDHHGYH. Residues 176–185 are compositionally biased toward basic and acidic residues; it reads HHGDGHWHKH.

The protein belongs to the UreE family.

The protein localises to the cytoplasm. Involved in urease metallocenter assembly. Binds nickel. Probably functions as a nickel donor during metallocenter assembly. This is Urease accessory protein UreE from Haemophilus influenzae (strain PittEE).